The chain runs to 94 residues: NADH-ubiquinone oxidoreductase 10.5 kDa subunit (94 aa).

The protein belongs to the complex I NDUFA2 subunit family. As to quaternary structure, complex I is composed of about 40 different subunits.

It is found in the mitochondrion inner membrane. Functionally, accessory subunit of the mitochondrial membrane respiratory chain NADH dehydrogenase (Complex I), that is believed not to be involved in catalysis. Complex I functions in the transfer of electrons from NADH to the respiratory chain. The immediate electron acceptor for the enzyme is believed to be ubiquinone. This chain is NADH-ubiquinone oxidoreductase 10.5 kDa subunit (nuo-10.5), found in Neurospora crassa (strain ATCC 24698 / 74-OR23-1A / CBS 708.71 / DSM 1257 / FGSC 987).